The sequence spans 484 residues: Cobyric acid synthase (484 aa).

The region spanning 251 to 438 (ALKIAVPVLS…LHGLFGNDEY (188 aa)) is the GATase cobBQ-type domain. Residue C333 is the Nucleophile of the active site. Residue H430 is part of the active site.

This sequence belongs to the CobB/CobQ family. CobQ subfamily.

It functions in the pathway cofactor biosynthesis; adenosylcobalamin biosynthesis. In terms of biological role, catalyzes amidations at positions B, D, E, and G on adenosylcobyrinic A,C-diamide. NH(2) groups are provided by glutamine, and one molecule of ATP is hydrogenolyzed for each amidation. The chain is Cobyric acid synthase from Allorhizobium ampelinum (strain ATCC BAA-846 / DSM 112012 / S4) (Agrobacterium vitis (strain S4)).